The following is a 128-amino-acid chain: Small nuclear ribonucleoprotein associated homolog 13 (128 aa).

The protein belongs to the eukaryotic ribosomal protein eL8 family.

Its subcellular location is the nucleus. It is found in the nucleolus. Functionally, binds to the 5'-stem-loop of U4 snRNA and may play a role in the late stage of spliceosome assembly. The protein undergoes a conformational change upon RNA-binding. This chain is Small nuclear ribonucleoprotein associated homolog 13, found in Caenorhabditis elegans.